Here is a 297-residue protein sequence, read N- to C-terminus: Syntaxin-4 (297 aa).

Over residues methionine 1 to aspartate 12 the composition is skewed to basic and acidic residues. A disordered region spans residues methionine 1–glutamate 21. Over methionine 1–leucine 275 the chain is Cytoplasmic. Phosphoserine is present on residues serine 14 and serine 15. Position 31 is a phosphothreonine (threonine 31). Phosphoserine is present on residues serine 36, serine 117, serine 208, and serine 248. A coiled-coil region spans residues histidine 43–threonine 163. The tract at residues glutamate 154–glycine 297 is interaction with CENPF. One can recognise a t-SNARE coiled-coil homology domain in the interval leucine 200–alanine 262. Residues isoleucine 276 to valine 296 form a helical; Anchor for type IV membrane protein membrane-spanning segment. Position 297 (glycine 297) is a topological domain, extracellular.

It belongs to the syntaxin family. As to quaternary structure, component of the SNARE complex composed of STX4, SNAP23 and VAMP7 that interacts with SYT7 during lysosomal exocytosis. Found in a complex with VAMP8 and SNAP23. Detected in a complex with SNAP23 and STXBP4. Interacts with VAMP2. Interacts with SNAP23 and SNAPIN. Interacts with LLGL1. Interacts (via C-terminus) with CENPF. Interacts with DOC2B. Interacts with STXBP6. Interacts with STXBP3; excludes interaction with DOC2B and SNAP25. Interacts with STXBP4; excludes interaction with VAMP2. Interacts with STXBP5L. In terms of tissue distribution, expressed in neutrophils and neutrophil-differentiated HL-60 cells. Expression in neutrophils increases with differentiation.

It is found in the cell membrane. Its subcellular location is the cell projection. The protein localises to the neuron projection. The protein resides in the stereocilium. Plasma membrane t-SNARE that mediates docking of transport vesicles. Necessary for the translocation of SLC2A4 from intracellular vesicles to the plasma membrane. In neurons, recruited at neurite tips to membrane domains rich in the phospholipid 1-oleoyl-2-palmitoyl-PC (OPPC) which promotes neurite tip surface expression of the dopamine transporter SLC6A3/DAT by facilitating fusion of SLC6A3-containing transport vesicles with the plasma membrane. Together with STXB3 and VAMP2, may also play a role in docking/fusion of intracellular GLUT4-containing vesicles with the cell surface in adipocytes and in docking of synaptic vesicles at presynaptic active zones. Required for normal hearing. The polypeptide is Syntaxin-4 (STX4) (Homo sapiens (Human)).